The sequence spans 329 residues: DNA-directed RNA polymerase subunit alpha (329 aa).

The interval 1-231 is alpha N-terminal domain (alpha-NTD); sequence MSILSFQMPE…KHFMLFSDQT (231 aa). The tract at residues 247–329 is alpha C-terminal domain (alpha-CTD); sequence EEFLHMRKLL…DTAKYKLDED (83 aa).

It belongs to the RNA polymerase alpha chain family. As to quaternary structure, homodimer. The RNAP catalytic core consists of 2 alpha, 1 beta, 1 beta' and 1 omega subunit. When a sigma factor is associated with the core the holoenzyme is formed, which can initiate transcription.

The enzyme catalyses RNA(n) + a ribonucleoside 5'-triphosphate = RNA(n+1) + diphosphate. Functionally, DNA-dependent RNA polymerase catalyzes the transcription of DNA into RNA using the four ribonucleoside triphosphates as substrates. This is DNA-directed RNA polymerase subunit alpha from Cytophaga hutchinsonii (strain ATCC 33406 / DSM 1761 / CIP 103989 / NBRC 15051 / NCIMB 9469 / D465).